A 220-amino-acid chain; its full sequence is Ribosomal RNA large subunit methyltransferase E (220 aa).

Positions 60, 62, 92, 108, and 133 each coordinate S-adenosyl-L-methionine. Catalysis depends on lysine 173, which acts as the Proton acceptor.

It belongs to the class I-like SAM-binding methyltransferase superfamily. RNA methyltransferase RlmE family.

The protein localises to the cytoplasm. The catalysed reaction is uridine(2552) in 23S rRNA + S-adenosyl-L-methionine = 2'-O-methyluridine(2552) in 23S rRNA + S-adenosyl-L-homocysteine + H(+). Functionally, specifically methylates the uridine in position 2552 of 23S rRNA at the 2'-O position of the ribose in the fully assembled 50S ribosomal subunit. The protein is Ribosomal RNA large subunit methyltransferase E of Paraburkholderia phytofirmans (strain DSM 17436 / LMG 22146 / PsJN) (Burkholderia phytofirmans).